The following is a 434-amino-acid chain: Glutamyl-tRNA reductase (434 aa).

Substrate is bound by residues 49–52 (TCNR), serine 114, 119–121 (EPQ), and glutamine 125. Residue cysteine 50 is the Nucleophile of the active site. Position 199 to 204 (199 to 204 (GAGETI)) interacts with NADP(+).

The protein belongs to the glutamyl-tRNA reductase family. As to quaternary structure, homodimer.

The catalysed reaction is (S)-4-amino-5-oxopentanoate + tRNA(Glu) + NADP(+) = L-glutamyl-tRNA(Glu) + NADPH + H(+). The protein operates within porphyrin-containing compound metabolism; protoporphyrin-IX biosynthesis; 5-aminolevulinate from L-glutamyl-tRNA(Glu): step 1/2. In terms of biological role, catalyzes the NADPH-dependent reduction of glutamyl-tRNA(Glu) to glutamate 1-semialdehyde (GSA). The chain is Glutamyl-tRNA reductase from Pasteurella multocida (strain Pm70).